The primary structure comprises 134 residues: ATP synthase epsilon chain (134 aa).

It belongs to the ATPase epsilon chain family. In terms of assembly, F-type ATPases have 2 components, CF(1) - the catalytic core - and CF(0) - the membrane proton channel. CF(1) has five subunits: alpha(3), beta(3), gamma(1), delta(1), epsilon(1). CF(0) has three main subunits: a, b and c.

It localises to the cellular thylakoid membrane. Functionally, produces ATP from ADP in the presence of a proton gradient across the membrane. This Prochlorococcus marinus (strain MIT 9515) protein is ATP synthase epsilon chain.